The sequence spans 412 residues: Histone-lysine N-methyltransferase SUV39H1 (412 aa).

The interval 1–89 (MAENLKGCSV…LKCVRILKQF (89 aa)) is interaction with SIRT1. A Chromo domain is found at 43 to 101 (FEVEYLCDYKKIREQEYYLVKWRGYPDSESTWEPRQNLKCVRILKQFHKDLERELLRRH). A Pre-SET domain is found at 179-240 (VGCECQDCLW…DCPNRVVQKG (62 aa)). Zn(2+)-binding residues include Cys181, Cys183, Cys186, Cys194, Cys195, Cys222, Cys226, Cys228, and Cys232. In terms of domain architecture, SET spans 243-366 (YDLCIFRTDD…AGEELTFDYN (124 aa)). 254-256 (RGW) serves as a coordination point for S-adenosyl-L-methionine. Residues 255-377 (GWGVRTLEKI…QVDPVDMEST (123 aa)) are mediates interaction with MECOM. N6-acetyllysine is present on Lys266. S-adenosyl-L-methionine is bound by residues Tyr297 and 323–324 (NH). Cys326 contributes to the Zn(2+) binding site. Ser391 carries the post-translational modification Phosphoserine. A Post-SET domain is found at 396–412 (VRIECKCGTESCRKYLF). Positions 400, 402, and 407 each coordinate Zn(2+).

This sequence belongs to the class V-like SAM-binding methyltransferase superfamily. Histone-lysine methyltransferase family. Suvar3-9 subfamily. Interacts with H3 and H4 histones. Interacts with GFI1B, DNMT3B, CBX1, CBX4, CCAR2, MBD1, RUNX1, RUNX3, MYOD1, SMAD5 and RB1. Interacts with SBF1 through the SET domain. Interacts with HDAC1 and HDAC2 through the N-terminus and associates with the core histone deacetylase complex composed of HDAC1, HDAC2, RBBP4 and RBBP7. Component of the eNoSC complex, composed of SIRT1, SUV39H1 and RRP8. Interacts (via SET domain) with MECOM; enhances MECOM transcriptional repression activity. Interacts with LMNA; the interaction increases stability of SUV39H1. The large PER complex involved in the histone methylation is composed of at least PER2, CBX3, TRIM28, SUV39H1 and/or SUV39H2; CBX3 mediates the formation of the complex. In terms of assembly, (Microbial infection) Interacts with HTLV-1 Tax protein, leading to abrogate Tax transactivation of HTLV-1 LTR. Phosphorylated on serine residues, and to a lesser degree, on threonine residues. The phosphorylated form is stabilized by SBF1 and is less active in its transcriptional repressor function. Post-translationally, ubiquitinated by the DCX(DCAF13) E3 ubiquitin ligase complex, leading to its degradation. In terms of processing, acetylated at Lys-266, leading to inhibition of enzyme activity. SIRT1-mediated deacetylation relieves this inhibition. (Microbial infection) A higher molecular weight form is also seen in M.bovis infected cells.

The protein resides in the nucleus. It localises to the nucleus lamina. It is found in the nucleoplasm. The protein localises to the chromosome. Its subcellular location is the centromere. The protein resides in the cytoplasmic vesicle. It localises to the phagosome lumen. It is found in the cell membrane. The catalysed reaction is L-lysyl(9)-[histone H3] + 3 S-adenosyl-L-methionine = N(6),N(6),N(6)-trimethyl-L-lysyl(9)-[histone H3] + 3 S-adenosyl-L-homocysteine + 3 H(+). Its activity is regulated as follows. Inhibited by S-adenosyl-L-homocysteine. Negatively regulated by CCAR2. Functionally, histone methyltransferase that specifically trimethylates 'Lys-9' of histone H3 using monomethylated H3 'Lys-9' as substrate. Also weakly methylates histone H1 (in vitro). H3 'Lys-9' trimethylation represents a specific tag for epigenetic transcriptional repression by recruiting HP1 (CBX1, CBX3 and/or CBX5) proteins to methylated histones. Mainly functions in heterochromatin regions, thereby playing a central role in the establishment of constitutive heterochromatin at pericentric and telomere regions. H3 'Lys-9' trimethylation is also required to direct DNA methylation at pericentric repeats. SUV39H1 is targeted to histone H3 via its interaction with RB1 and is involved in many processes, such as repression of MYOD1-stimulated differentiation, regulation of the control switch for exiting the cell cycle and entering differentiation, repression by the PML-RARA fusion protein, BMP-induced repression, repression of switch recombination to IgA and regulation of telomere length. Component of the eNoSC (energy-dependent nucleolar silencing) complex, a complex that mediates silencing of rDNA in response to intracellular energy status and acts by recruiting histone-modifying enzymes. The eNoSC complex is able to sense the energy status of cell: upon glucose starvation, elevation of NAD(+)/NADP(+) ratio activates SIRT1, leading to histone H3 deacetylation followed by dimethylation of H3 at 'Lys-9' (H3K9me2) by SUV39H1 and the formation of silent chromatin in the rDNA locus. Recruited by the large PER complex to the E-box elements of the circadian target genes such as PER2 itself or PER1, contributes to the conversion of local chromatin to a heterochromatin-like repressive state through H3 'Lys-9' trimethylation. Its function is as follows. (Microbial infection) Plays a role in defense against mycobacterial infections. Methylates M.tuberculosis HupB on 'Lys-140', probably methylates HupB of M.bovis also. Methylation has an inhibitory effect on mycobacterial growth in the host. Macrophages expressing about 60% SUV39H1 are slightly more susceptible to M.bovis or M.tuberculosis infection. Chaetocin (an inhibitor of this enzyme) increases macrophage survival of M.tuberculosis. This protein inhibits biofilm formation by M.tuberculosis via 'Lys-140' trimethylation. The sequence is that of Histone-lysine N-methyltransferase SUV39H1 (SUV39H1) from Homo sapiens (Human).